Consider the following 692-residue polypeptide: Elongation factor G (692 aa).

The region spanning 8 to 282 (ENTRNIGIMA…GVVDYLPSPV (275 aa)) is the tr-type G domain. GTP-binding positions include 17-24 (AHIDAGKT), 81-85 (DTPGH), and 135-138 (NKMD).

Belongs to the TRAFAC class translation factor GTPase superfamily. Classic translation factor GTPase family. EF-G/EF-2 subfamily.

The protein localises to the cytoplasm. Functionally, catalyzes the GTP-dependent ribosomal translocation step during translation elongation. During this step, the ribosome changes from the pre-translocational (PRE) to the post-translocational (POST) state as the newly formed A-site-bound peptidyl-tRNA and P-site-bound deacylated tRNA move to the P and E sites, respectively. Catalyzes the coordinated movement of the two tRNA molecules, the mRNA and conformational changes in the ribosome. In Anoxybacillus flavithermus (strain DSM 21510 / WK1), this protein is Elongation factor G.